Reading from the N-terminus, the 637-residue chain is Chaperone protein HtpG (637 aa).

The segment at 1 to 338 (MMELKMHNVK…SPDLPLNISR (338 aa)) is a; substrate-binding. The b stretch occupies residues 339 to 558 (ETLQNNRVVE…EGAMDLRMER (220 aa)). Residues 493-512 (KFSPEEKDKENKSDEERAEG) are disordered. A c region spans residues 559–637 (FLREQNQLNY…LNNLLGKVII (79 aa)).

Belongs to the heat shock protein 90 family. In terms of assembly, homodimer.

It is found in the cytoplasm. Its function is as follows. Molecular chaperone. Has ATPase activity. In Wolbachia sp. subsp. Brugia malayi (strain TRS), this protein is Chaperone protein HtpG.